A 2474-amino-acid chain; its full sequence is Serine/threonine-protein kinase TOR2 (2474 aa).

Residues 1–62 form a disordered region; that stretch reads MNKYINKYTT…NGPNDSGRVI (62 aa). At Thr10 the chain carries Phosphothreonine. A compositionally biased stretch (basic residues) spans 25 to 36; sequence HRTRKKLTHKSH. Residues 43–56 are compositionally biased toward polar residues; sequence STTSNTDSNHNGPN. HEAT repeat units lie at residues 588 to 626, 636 to 674, 676 to 710, 756 to 793, 797 to 835, 841 to 879, 917 to 955, 1039 to 1076, 1079 to 1116, 1118 to 1155, and 1292 to 1331; these read YSLT…KDDI, HSVS…PQLA, PDNL…VNPA, PYID…VGGK, RYLK…SSGY, LDYP…LDPY, YYPT…NLGL, RFVP…FGPN, DYSH…NINL, EMSS…QLGT, and SYQE…DDKP. Residues 1338-1922 enclose the FAT domain; the sequence is TLGKYAQKCH…VYPLMVAIKS (585 aa). Residues 2097-2421 form the PI3K/PI4K catalytic domain; the sequence is FEPVFSVISS…EHKNAIRNAR (325 aa). A G-loop region spans residues 2103–2109; it reads VISSKQR. The segment at 2276-2284 is catalytic loop; it reads GLGDRHPSN. The segment at 2296–2321 is activation loop; it reads HIDFGDCFEAAILREKFPEKVPFRLT. Residues 2442-2474 enclose the FATC domain; it reads NDLDVPEQVDKLIQQATSVENLCQHYIGWCPFW.

This sequence belongs to the PI3/PI4-kinase family. The target of rapamycin complex 1 (TORC1) is composed of at least KOG1, LST8, TCO89 and either TOR1 (TORC1-A) or TOR2 (TORC1-B). TORC1 binds to and is inhibited by FKBP-rapamycin. Interacts with PIB2; following activation of PIB2 by glutamine. The target of rapamycin complex 2 (TORC2) is composed of at least AVO1, AVO2, BIT61, LST8, TOR2 and TSC11. TORC2 forms a homodimer. Contrary to TORC1, TORC2 does not bind to and is not sensitive to FKBP-rapamycin. Interacts with SLM1 and SLM2.

The protein resides in the cell membrane. It is found in the vacuole membrane. It carries out the reaction L-seryl-[protein] + ATP = O-phospho-L-seryl-[protein] + ADP + H(+). The enzyme catalyses L-threonyl-[protein] + ATP = O-phospho-L-threonyl-[protein] + ADP + H(+). It catalyses the reaction a 1,2-diacyl-sn-glycero-3-phospho-(1D-myo-inositol) + ATP = a 1,2-diacyl-sn-glycero-3-phospho-(1D-myo-inositol 4-phosphate) + ADP + H(+). In terms of biological role, phosphatidylinositol 3-kinase homolog, component of both TORC1 and TORC2. TORC1 regulates multiple cellular processes to control cell growth in response to environmental signals. Nutrient limitation and environmental stress signals cause inactivation of TORC1. Active TORC1 positively controls ribosome biogenesis via control of rRNA, ribosomal protein and tRNA gene expression, and rRNA processing. TORC1 positively controls protein biosynthesis by regulation of mRNA stability, translation initiation factor activity, and high-affinity amino acid permeases that serve to provide amino acids for use by the translation machinery. TORC1 also promotes growth by sequestering a number of nutrient and general stress-responsive transcription factors in the cytoplasm. TORC1 negatively controls macroautophagy, a process to recycle surplus cytoplasmic mass under nutrient starvation conditions. TORC1 controls many of these processes via TIP41-TAP42-mediated inhibition of the type 2A-related phosphatases PP2A and SIT4. In nutrient-rich conditions, responsible for the phosphorylation of AGC S6 kinase (S6K) YPK3, activating YPK3 kinase activity and promoting phosphorylation of ribosomal protein S6. Phosphorylates kinase SCH9 at 6 amino acids in the C-terminus, activating SCH9 kinase activity to properly regulate ribosome biogenesis, translation initiation, and entry into stationary phase. TORC2 regulates cell cycle-dependent polarization of the actin-cytoskeleton, cell wall integrity, and receptor endocytosis. TORC2 controls polarity of the actin cytoskeleton, which is required for orienting the secretory pathway toward discrete growth sites, via the RHO1/PKC1/MAPK cell integrity pathway by activating the RHO1 guanine nucleotide exchange factor ROM2. TORC2 phosphorylates the AGC kinase YPK2, an upstream effector of the cell integrity pathway. TORC2 negatively regulates calcineurin-dependent stress signaling via phosphorylation of its effector SLM1-SLM2. The chain is Serine/threonine-protein kinase TOR2 (TOR2) from Saccharomyces cerevisiae (strain ATCC 204508 / S288c) (Baker's yeast).